Reading from the N-terminus, the 210-residue chain is Ribosomal RNA large subunit methyltransferase E (210 aa).

G60, W62, D85, D101, and D126 together coordinate S-adenosyl-L-methionine. The active-site Proton acceptor is K166. Basic and acidic residues predominate over residues 191 to 200; that stretch reads KPKASRDKSS. Residues 191-210 form a disordered region; that stretch reads KPKASRDKSSETFLVARDLK.

It belongs to the class I-like SAM-binding methyltransferase superfamily. RNA methyltransferase RlmE family.

It localises to the cytoplasm. It catalyses the reaction uridine(2552) in 23S rRNA + S-adenosyl-L-methionine = 2'-O-methyluridine(2552) in 23S rRNA + S-adenosyl-L-homocysteine + H(+). Its function is as follows. Specifically methylates the uridine in position 2552 of 23S rRNA at the 2'-O position of the ribose in the fully assembled 50S ribosomal subunit. The protein is Ribosomal RNA large subunit methyltransferase E of Bordetella bronchiseptica (strain ATCC BAA-588 / NCTC 13252 / RB50) (Alcaligenes bronchisepticus).